The primary structure comprises 195 residues: ATP-dependent Clp protease proteolytic subunit (195 aa).

S97 serves as the catalytic Nucleophile. Residue H122 is part of the active site.

This sequence belongs to the peptidase S14 family. In terms of assembly, fourteen ClpP subunits assemble into 2 heptameric rings which stack back to back to give a disk-like structure with a central cavity, resembling the structure of eukaryotic proteasomes.

It localises to the cytoplasm. The catalysed reaction is Hydrolysis of proteins to small peptides in the presence of ATP and magnesium. alpha-casein is the usual test substrate. In the absence of ATP, only oligopeptides shorter than five residues are hydrolyzed (such as succinyl-Leu-Tyr-|-NHMec, and Leu-Tyr-Leu-|-Tyr-Trp, in which cleavage of the -Tyr-|-Leu- and -Tyr-|-Trp bonds also occurs).. Functionally, cleaves peptides in various proteins in a process that requires ATP hydrolysis. Has a chymotrypsin-like activity. Plays a major role in the degradation of misfolded proteins. The chain is ATP-dependent Clp protease proteolytic subunit from Campylobacter hominis (strain ATCC BAA-381 / DSM 21671 / CCUG 45161 / LMG 19568 / NCTC 13146 / CH001A).